A 396-amino-acid polypeptide reads, in one-letter code: S-adenosylmethionine synthase (396 aa).

His16 contributes to the ATP binding site. Asp18 contributes to the Mg(2+) binding site. K(+) is bound at residue Glu44. Glu57 and Gln100 together coordinate L-methionine. The segment at 100–110 (QSVDIAQGVDR) is flexible loop. Residues 165–167 (DAK), Asp240, 246–247 (RK), Ala263, and Lys267 each bind ATP. L-methionine is bound at residue Asp240. Position 271 (Lys271) interacts with L-methionine.

This sequence belongs to the AdoMet synthase family. As to quaternary structure, homotetramer; dimer of dimers. Mg(2+) is required as a cofactor. The cofactor is K(+).

It localises to the cytoplasm. The enzyme catalyses L-methionine + ATP + H2O = S-adenosyl-L-methionine + phosphate + diphosphate. It participates in amino-acid biosynthesis; S-adenosyl-L-methionine biosynthesis; S-adenosyl-L-methionine from L-methionine: step 1/1. Catalyzes the formation of S-adenosylmethionine (AdoMet) from methionine and ATP. The overall synthetic reaction is composed of two sequential steps, AdoMet formation and the subsequent tripolyphosphate hydrolysis which occurs prior to release of AdoMet from the enzyme. The sequence is that of S-adenosylmethionine synthase from Pseudomonas entomophila (strain L48).